Here is an 86-residue protein sequence, read N- to C-terminus: Large ribosomal subunit protein bL27 (86 aa).

Gly residues predominate over residues 1–10 (MAQKKGGGST). The interval 1-21 (MAQKKGGGSTRNGRDSESKRL) is disordered.

Belongs to the bacterial ribosomal protein bL27 family.

The chain is Large ribosomal subunit protein bL27 from Cupriavidus taiwanensis (strain DSM 17343 / BCRC 17206 / CCUG 44338 / CIP 107171 / LMG 19424 / R1) (Ralstonia taiwanensis (strain LMG 19424)).